A 344-amino-acid chain; its full sequence is Phosphoribosylformylglycinamidine cyclo-ligase (344 aa).

This sequence belongs to the AIR synthase family.

The protein localises to the cytoplasm. It catalyses the reaction 2-formamido-N(1)-(5-O-phospho-beta-D-ribosyl)acetamidine + ATP = 5-amino-1-(5-phospho-beta-D-ribosyl)imidazole + ADP + phosphate + H(+). It functions in the pathway purine metabolism; IMP biosynthesis via de novo pathway; 5-amino-1-(5-phospho-D-ribosyl)imidazole from N(2)-formyl-N(1)-(5-phospho-D-ribosyl)glycinamide: step 2/2. This is Phosphoribosylformylglycinamidine cyclo-ligase from Neisseria meningitidis serogroup B (strain ATCC BAA-335 / MC58).